The primary structure comprises 312 residues: Homoserine O-acetyltransferase (312 aa).

Cys-142 functions as the Acyl-thioester intermediate in the catalytic mechanism. Lys-163 and Ser-192 together coordinate substrate. His-235 acts as the Proton acceptor in catalysis. The active site involves Glu-237. Arg-249 contributes to the substrate binding site.

This sequence belongs to the MetA family.

It localises to the cytoplasm. It carries out the reaction L-homoserine + acetyl-CoA = O-acetyl-L-homoserine + CoA. It functions in the pathway amino-acid biosynthesis; L-methionine biosynthesis via de novo pathway; O-acetyl-L-homoserine from L-homoserine: step 1/1. Transfers an acetyl group from acetyl-CoA to L-homoserine, forming acetyl-L-homoserine. This chain is Homoserine O-acetyltransferase, found in Chelativorans sp. (strain BNC1).